Consider the following 121-residue polypeptide: Small ribosomal subunit protein uS13 (121 aa).

Residues 96-121 (PVRGQNTKNNARTRKGKAVAIAGKKK) are disordered. The segment covering 106 to 121 (ARTRKGKAVAIAGKKK) has biased composition (basic residues).

The protein belongs to the universal ribosomal protein uS13 family. Part of the 30S ribosomal subunit. Forms a loose heterodimer with protein S19. Forms two bridges to the 50S subunit in the 70S ribosome.

In terms of biological role, located at the top of the head of the 30S subunit, it contacts several helices of the 16S rRNA. In the 70S ribosome it contacts the 23S rRNA (bridge B1a) and protein L5 of the 50S subunit (bridge B1b), connecting the 2 subunits; these bridges are implicated in subunit movement. Contacts the tRNAs in the A and P-sites. The sequence is that of Small ribosomal subunit protein uS13 from Streptococcus agalactiae serotype Ia (strain ATCC 27591 / A909 / CDC SS700).